A 288-amino-acid polypeptide reads, in one-letter code: Polyketide biosynthesis malonyl CoA-acyl carrier protein transacylase PksC (288 aa).

Catalysis depends on residues serine 87 and histidine 193.

It belongs to the FabD family.

It is found in the cytoplasm. The catalysed reaction is holo-[ACP] + malonyl-CoA = malonyl-[ACP] + CoA. Its pathway is antibiotic biosynthesis; bacillaene biosynthesis. Its function is as follows. Involved in some intermediate steps for the synthesis of the antibiotic polyketide bacillaene which is involved in secondary metabolism. It catalyzes the transfer of the malonyl-CoA group to the acyl-carrier-protein AcpK (Mal-AcpK). The sequence is that of Polyketide biosynthesis malonyl CoA-acyl carrier protein transacylase PksC (pksC) from Bacillus subtilis (strain 168).